The sequence spans 427 residues: Glutamate-1-semialdehyde 2,1-aminomutase (427 aa).

Lys265 carries the post-translational modification N6-(pyridoxal phosphate)lysine.

The protein belongs to the class-III pyridoxal-phosphate-dependent aminotransferase family. HemL subfamily. In terms of assembly, homodimer. Requires pyridoxal 5'-phosphate as cofactor.

The protein resides in the cytoplasm. The enzyme catalyses (S)-4-amino-5-oxopentanoate = 5-aminolevulinate. Its pathway is porphyrin-containing compound metabolism; protoporphyrin-IX biosynthesis; 5-aminolevulinate from L-glutamyl-tRNA(Glu): step 2/2. The sequence is that of Glutamate-1-semialdehyde 2,1-aminomutase from Mannheimia succiniciproducens (strain KCTC 0769BP / MBEL55E).